The primary structure comprises 829 residues: Telomere length regulation protein TEL2 homolog (829 aa).

Disordered stretches follow at residues 446–493 and 620–641; these read SADF…DDLV and SEKP…PHSI. The segment covering 456-466 has biased composition (low complexity); that stretch reads SSPSKSPLSSP. Positions 467–480 are enriched in basic and acidic residues; it reads EVREKSKVKVKADQ. Positions 482-493 are enriched in acidic residues; it reads SDSDLDSDDDLV. Residues 629–641 are compositionally biased toward polar residues; the sequence is AESGSVNTDPHSI.

Belongs to the TEL2 family.

The protein localises to the cytoplasm. The protein resides in the membrane. It localises to the nucleus. Its subcellular location is the chromosome. It is found in the telomere. Regulator of the DNA damage response (DDR). Part of the TTT complex that is required to stabilize protein levels of the phosphatidylinositol 3-kinase-related protein kinase (PIKK) family proteins. Promotes assembly, stabilizes and maintains the activity of TORC complexes, which regulate cell growth and survival in response to nutrient and hormonal signals. May be involved in telomere length regulation. This Xenopus tropicalis (Western clawed frog) protein is Telomere length regulation protein TEL2 homolog (telo2).